Consider the following 398-residue polypeptide: Aspartic protease 3 (398 aa).

Residues 1–17 (MSGRVFLLLALVALASA) form the signal peptide. Residues 18-55 (IQRIKLEKRTYTREQYKFGSIQEHLKAKYVPGYIPNKD) constitute a propeptide, removed in mature form. The Peptidase A1 domain maps to 69–392 (YYGPVTIGTP…DHGNKRVGFA (324 aa)). Aspartate 87 is an active-site residue. Cysteines 100 and 107 form a disulfide. Aspartate 279 is an active-site residue. Cysteine 313 and cysteine 351 are oxidised to a cystine. An N-linked (GlcNAc...) asparagine glycan is attached at asparagine 321.

This sequence belongs to the peptidase A1 family. In terms of tissue distribution, highly expressed in intestine and to a lower extent in body wall muscles, hypodermis and neurons.

Its subcellular location is the cytoplasm. It localises to the lysosome. It is found in the secreted. Functionally, aspartic protease. Part of the necrosis cell death pathway. Involved in neuronal cell degeneration. Involved in heat stress response. The chain is Aspartic protease 3 from Caenorhabditis elegans.